The primary structure comprises 635 residues: Multiple inositol polyphosphate phosphatase 1 (635 aa).

The first 23 residues, 1-23, serve as a signal peptide directing secretion; sequence MMVKIKNIIILFCIFGLLSNVSS. Residues 24–565 are Extracellular-facing; sequence LSSSSSSSQS…GNDSHSKKSS (542 aa). Residues 66–102 are disordered; sequence KNGDSNSQGDGSSGNSNSNSNSNSNSNSNSDSSNEPP. The span at 67–99 shows a compositional bias: low complexity; that stretch reads NGDSNSQGDGSSGNSNSNSNSNSNSNSNSDSSN. His116 is an active-site residue. Residues 380–421 show a composition bias toward low complexity; the sequence is SSSSSSSSSSNNGDNSGSNGSSGSGSSTSTSSNDNGSTNNND. The tract at residues 380–425 is disordered; that stretch reads SSSSSSSSSSNNGDNSGSNGSSGSGSSTSTSSNDNGSTNNNDNKVE. A helical transmembrane segment spans residues 566 to 586; it reads YFLAIFIPITFLVGGTIGGIF. Residues 587–635 lie on the Cytoplasmic side of the membrane; that stretch reads TYFSYEKIMQVKNRKKLTQYGNDEFISSPKSKSFSFKPTKFDSRSPLIQ. Residues 614 to 624 show a composition bias toward low complexity; sequence SPKSKSFSFKP. Residues 614-635 form a disordered region; that stretch reads SPKSKSFSFKPTKFDSRSPLIQ.

Belongs to the histidine acid phosphatase family. MINPP1 subfamily.

The protein localises to the membrane. It catalyses the reaction 1D-myo-inositol hexakisphosphate + H2O = 1D-myo-inositol 1,2,4,5,6-pentakisphosphate + phosphate. It carries out the reaction 1D-myo-inositol 1,2,4,5,6-pentakisphosphate + H2O = 1D-myo-inositol 1,2,5,6-tetrakisphosphate + phosphate. The catalysed reaction is 1D-myo-inositol 1,2,5,6-tetrakisphosphate + H2O = 1D-myo-inositol 1,2,6-trisphosphate + phosphate. The enzyme catalyses 1D-myo-inositol 1,2,6-trisphosphate + H2O = 1D-myo-inositol 1,2-bisphosphate + phosphate. It catalyses the reaction 1D-myo-inositol 1,2-bisphosphate + H2O = 1D-myo-inositol 2-phosphate + phosphate. It carries out the reaction (2R)-2,3-bisphosphoglycerate + H2O = (2R)-2-phosphoglycerate + phosphate. Functionally, probable multiple inositol polyphosphate phosphatase that hydrolyzes 1D-myo-inositol 1,3,4,5,6-pentakisphosphate (InsP5[2OH]) and 1D-myo-inositol hexakisphosphate (InsP6) to a range of less phosphorylated inositol phosphates. This regulates the availability of these various small molecule second messengers and metal chelators which control many aspects of cell physiology. May have a dual substrate specificity, and function as a 2,3-bisphosphoglycerate 3-phosphatase hydrolyzing 2,3-bisphosphoglycerate to 2-phosphoglycerate. 2,3-bisphosphoglycerate (BPG) is formed as part of the Rapoport-Luebering glycolytic bypass. The protein is Multiple inositol polyphosphate phosphatase 1 (mipp1) of Dictyostelium discoideum (Social amoeba).